The sequence spans 459 residues: MNRLPSSASALACSAHALNLIEKRTLNHEEMKALNREVIDYFKEHVNPGFLEYRKSVTAGGDYGAVEWQAGSLNTLVDTQGQEFIDCLGGFGIFNVGHRNPVVVSAVQNQLAKQPLHSQELLDPLRAMLAKTLAALTPGKLKYSFFCNSGTESVEAALKLAKAYQSPRGKFTFIATSGAFHGKSLGALSATAKSTFRRPFMPLLPGFRHVPFGNIDAMSMAFSEGKKTGDEIAAVILEPIQGEGGVILPPQGYLTEVRKLCDEFGALMILDEVQTGMGRTGKMFACEHENVQPDILCLAKALGGGVMPIGATIATEEVFSVLFDNPFLHTTTFGGNPLACAAALATINVLLEQNLPAQAEQKGDTLLDSFRQLAREYPNLVHEARGKGMLMAIEFVDNETGYRFASEMFRQRVLVAGTLNNAKTIRIEPPLTLTIELCEQVLKSARNALAAMQVSVEEV.

Residues 150–151 and glutamine 274 each bind pyridoxal 5'-phosphate; that span reads GT. Lysine 300 bears the N6-(pyridoxal phosphate)lysine mark. Threonine 332 serves as a coordination point for pyridoxal 5'-phosphate.

The protein belongs to the class-III pyridoxal-phosphate-dependent aminotransferase family. Putrescine aminotransferase subfamily. Pyridoxal 5'-phosphate is required as a cofactor.

The enzyme catalyses an alkane-alpha,omega-diamine + 2-oxoglutarate = an omega-aminoaldehyde + L-glutamate. It carries out the reaction putrescine + 2-oxoglutarate = 1-pyrroline + L-glutamate + H2O. The catalysed reaction is cadaverine + 2-oxoglutarate = 5-aminopentanal + L-glutamate. The protein operates within amine and polyamine degradation; putrescine degradation; 4-aminobutanal from putrescine (transaminase route): step 1/1. Its function is as follows. Catalyzes the aminotransferase reaction from putrescine to 2-oxoglutarate, leading to glutamate and 4-aminobutanal, which spontaneously cyclizes to form 1-pyrroline. This is the first step in one of two pathways for putrescine degradation, where putrescine is converted into 4-aminobutanoate (gamma-aminobutyrate or GABA) via 4-aminobutanal. Also functions as a cadaverine transaminase in a a L-lysine degradation pathway to succinate that proceeds via cadaverine, glutarate and L-2-hydroxyglutarate. The polypeptide is Putrescine aminotransferase (Salmonella paratyphi A (strain ATCC 9150 / SARB42)).